We begin with the raw amino-acid sequence, 528 residues long: Putative B3 domain-containing protein REM15 (528 aa).

2 DNA-binding regions (TF-B3) span residues 3-95 (HQHF…LGPS) and 135-231 (CFVA…LPNE). A disordered region spans residues 234–253 (EEANEVSLPEEPESDAERNL). DNA-binding regions (TF-B3) lie at residues 279-376 (CFVA…IPNE) and 425-522 (QSSL…FCSK).

It is found in the nucleus. The chain is Putative B3 domain-containing protein REM15 (REM15.15) from Arabidopsis thaliana (Mouse-ear cress).